A 460-amino-acid polypeptide reads, in one-letter code: Bifunctional protein GlmU (460 aa).

Residues 1–228 (MKNYALVLAA…NSLAMGVNDL (228 aa)) form a pyrophosphorylase region. UDP-N-acetyl-alpha-D-glucosamine contacts are provided by residues 8-11 (LAAG), K22, Q72, and 77-78 (GT). Residue D102 coordinates Mg(2+). Residues G139, E154, N169, and N226 each coordinate UDP-N-acetyl-alpha-D-glucosamine. N226 contributes to the Mg(2+) binding site. The interval 229-249 (YAISKAEKYLREYINKDHMLN) is linker. An N-acetyltransferase region spans residues 250-460 (GVSMINPETI…LISPKPKKEE (211 aa)). UDP-N-acetyl-alpha-D-glucosamine contacts are provided by R331 and K349. Catalysis depends on H361, which acts as the Proton acceptor. UDP-N-acetyl-alpha-D-glucosamine-binding residues include Y364 and N375. Residues 384-385 (NY), A421, and R438 contribute to the acetyl-CoA site.

The protein in the N-terminal section; belongs to the N-acetylglucosamine-1-phosphate uridyltransferase family. In the C-terminal section; belongs to the transferase hexapeptide repeat family. In terms of assembly, homotrimer. Mg(2+) serves as cofactor.

It is found in the cytoplasm. It carries out the reaction alpha-D-glucosamine 1-phosphate + acetyl-CoA = N-acetyl-alpha-D-glucosamine 1-phosphate + CoA + H(+). It catalyses the reaction N-acetyl-alpha-D-glucosamine 1-phosphate + UTP + H(+) = UDP-N-acetyl-alpha-D-glucosamine + diphosphate. The protein operates within nucleotide-sugar biosynthesis; UDP-N-acetyl-alpha-D-glucosamine biosynthesis; N-acetyl-alpha-D-glucosamine 1-phosphate from alpha-D-glucosamine 6-phosphate (route II): step 2/2. Its pathway is nucleotide-sugar biosynthesis; UDP-N-acetyl-alpha-D-glucosamine biosynthesis; UDP-N-acetyl-alpha-D-glucosamine from N-acetyl-alpha-D-glucosamine 1-phosphate: step 1/1. It functions in the pathway bacterial outer membrane biogenesis; LPS lipid A biosynthesis. Its function is as follows. Catalyzes the last two sequential reactions in the de novo biosynthetic pathway for UDP-N-acetylglucosamine (UDP-GlcNAc). The C-terminal domain catalyzes the transfer of acetyl group from acetyl coenzyme A to glucosamine-1-phosphate (GlcN-1-P) to produce N-acetylglucosamine-1-phosphate (GlcNAc-1-P), which is converted into UDP-GlcNAc by the transfer of uridine 5-monophosphate (from uridine 5-triphosphate), a reaction catalyzed by the N-terminal domain. In Acholeplasma laidlawii (strain PG-8A), this protein is Bifunctional protein GlmU.